The following is a 950-amino-acid chain: MMQQYQSNSYLFGGNAPYVEELYEAYLQNPASVPDNWRAYFDAMQNVPAVDGSNGRDIPHAPIVASFAERAKQGPIRTIVASADSDMGRKRVAATQLIAAYRNIGSHWADLDPLKRQERPPLPDLDPAFYGFSEADLDIVFNASNTYFGKESMSLRELLNNLRETYCGTIGFEFMYVSDQAQKRWWQERLETTRSKPVFTLEKKKHILDRLTAAEGLERFLHTKYVGQKRFSLEGGESFIAAMDELIQHAGSKGVQEIVIGMAHRGRLNVLVNTLGKMPADLFAEFEGKHVDDLPAGDVKYHKGFSSDVSTEGGPVHLSLAFNPSHLEIVNPVVEGSAKARQERRGEVGHKEVLPVQVHGDAAFAGQGVVMETLNLAQTRGYGTGGSMHIVINNQIGFTTSDPRDARSTLYCTDVVKMIEAPVLHVNGDDPEAVVYAMQLAVDFRMEFKKDVVVDIICFRKLGHNEQDTPAVTQPLMYKKIAQHPGTRKLYADKLAAQNLVPAEFGDEKVKAYRAAMDAGKHTADPVLSNFKNKFAVDWMPFLNRKWTDAADTAVPVTELKRLAERITTTPETLKLHPLVEKVVKDRANMGRGDQPLDWGMGEHLAFASLVSSGYPVRITGQDAGRGTFTHRHAVLHDQARERWDAGSYVPLQNVSENQAPFTVIDSVLSEEAVLGFEYGYSAAEPNALVIWEAQFGDFVNGAQVVIDQFISSGEVKWGRASGLTLMLPHGYEGQGPEHSSARIERFLQLCADHNMQVCQPTTPAQIFHLLRRQMIRLFRKPLVIMTPKSLLRNKDAVSPLSDLAKGHFETVIPDHEELNASKVKRVIMCSGKVYYDLVNTRKEREANDTAVIRLEQLYPFPHKAVAAELKKYPNATEIVWCQDEPQNQGAWFFVQHYIMENMTDGQKLGYAGRPASASPAVGYYAKHNEQQKALLEAAFAKLKGFVLTK.

It belongs to the alpha-ketoglutarate dehydrogenase family. As to quaternary structure, homodimer. Part of the 2-oxoglutarate dehydrogenase (OGDH) complex composed of E1 (2-oxoglutarate dehydrogenase), E2 (dihydrolipoamide succinyltransferase) and E3 (dihydrolipoamide dehydrogenase); the complex contains multiple copies of the three enzymatic components (E1, E2 and E3). Thiamine diphosphate is required as a cofactor.

The enzyme catalyses N(6)-[(R)-lipoyl]-L-lysyl-[protein] + 2-oxoglutarate + H(+) = N(6)-[(R)-S(8)-succinyldihydrolipoyl]-L-lysyl-[protein] + CO2. E1 component of the 2-oxoglutarate dehydrogenase (OGDH) complex which catalyzes the decarboxylation of 2-oxoglutarate, the first step in the conversion of 2-oxoglutarate to succinyl-CoA and CO(2). The protein is 2-oxoglutarate dehydrogenase E1 component (odhA) of Cupriavidus necator (strain ATCC 17699 / DSM 428 / KCTC 22496 / NCIMB 10442 / H16 / Stanier 337) (Ralstonia eutropha).